A 271-amino-acid polypeptide reads, in one-letter code: Acyl-[acyl-carrier-protein]--UDP-N-acetylglucosamine O-acyltransferase (271 aa).

Belongs to the transferase hexapeptide repeat family. LpxA subfamily. As to quaternary structure, homotrimer.

The protein localises to the cytoplasm. It carries out the reaction a (3R)-hydroxyacyl-[ACP] + UDP-N-acetyl-alpha-D-glucosamine = a UDP-3-O-[(3R)-3-hydroxyacyl]-N-acetyl-alpha-D-glucosamine + holo-[ACP]. The protein operates within glycolipid biosynthesis; lipid IV(A) biosynthesis; lipid IV(A) from (3R)-3-hydroxytetradecanoyl-[acyl-carrier-protein] and UDP-N-acetyl-alpha-D-glucosamine: step 1/6. Its function is as follows. Involved in the biosynthesis of lipid A, a phosphorylated glycolipid that anchors the lipopolysaccharide to the outer membrane of the cell. This Ralstonia nicotianae (strain ATCC BAA-1114 / GMI1000) (Ralstonia solanacearum) protein is Acyl-[acyl-carrier-protein]--UDP-N-acetylglucosamine O-acyltransferase.